Consider the following 554-residue polypeptide: Malate synthase 1 (554 aa).

Catalysis depends on Arg177, which acts as the Proton acceptor. The active-site Proton donor is the Asp457. Residues 552-554 carry the SKL peroxisome targeting motif motif; the sequence is SKL.

This sequence belongs to the malate synthase family. In terms of assembly, interacts with PEX9.

The protein localises to the peroxisome matrix. The enzyme catalyses glyoxylate + acetyl-CoA + H2O = (S)-malate + CoA + H(+). The protein operates within carbohydrate metabolism; glyoxylate cycle; (S)-malate from isocitrate: step 2/2. Functionally, malate synthase which takes part in the glyoxylate cycle. MLS1 activity is essential for cells to grow on oleic acid as a sole carbon source. Two steps of the glyoxylate cycle take place in the cytosol, the splitting of isocitrate into succinate and glyoxylate, and the dehydrogenation of malate to oxaloacetate. However, the formation of malate from glyoxylate and acetyl-CoA undertaken MLS1, occurs in the peroxisomes when cells are grown on oleic acid. The source of acetyl-CoA being either peroxisomal when breaking down fatty acids, or cytosolic when extra-cellular two-carbon substrates are used, therefore, although not strictly essential, the peroxisomal localization of MLS1 appears to be advantageous for cells growing on oleic acid, in that acetyl-CoA production and utilization are thereby intimately compartmentalized together to increase efficiency. The sequence is that of Malate synthase 1 from Saccharomyces cerevisiae (strain ATCC 204508 / S288c) (Baker's yeast).